The following is a 149-amino-acid chain: Large ribosomal subunit protein bL9 (149 aa).

Belongs to the bacterial ribosomal protein bL9 family.

In terms of biological role, binds to the 23S rRNA. The protein is Large ribosomal subunit protein bL9 of Xylella fastidiosa (strain 9a5c).